The chain runs to 461 residues: Probable metabolite transport protein CsbC (461 aa).

The Cytoplasmic portion of the chain corresponds to 1 to 14 (MKKDTRKYMIYFFG). A helical transmembrane segment spans residues 15 to 35 (ALGGLLYGYDTGVISGALLFI). Over 36–38 (NND) the chain is Extracellular. The chain crosses the membrane as a helical span at residues 39-59 (IPLTTLTEGLVVSMLLLGAIF). The Cytoplasmic portion of the chain corresponds to 60–76 (GSALSGTCSDRWGRRKV). A helical transmembrane segment spans residues 77-97 (VFVLSIIFIIGALACAFSQTI). Residues 98 to 104 (GMLIASR) are Extracellular-facing. The chain crosses the membrane as a helical span at residues 105–125 (VILGLAVGGSTALVPVYLSEM). The Cytoplasmic portion of the chain corresponds to 126-139 (APTKIRGTLGTMNN). A helical membrane pass occupies residues 140 to 160 (LMIVTGILLAYIVNYLFTPFE). The Extracellular portion of the chain corresponds to 161–163 (AWR). The helical transmembrane segment at 164 to 184 (WMVGLAAVPAVLLLIGIAFMP) threads the bilayer. Over 185-241 (ESPRWLVKRGSEEEARRIMNITHDPKDIEMELAEMKQGEAEKKETTLGVLKAKWIRP) the chain is Cytoplasmic. A helical transmembrane segment spans residues 242–262 (MLLIGVGLAIFQQAVGINTVI). Residues 263-280 (YYAPTIFTKAGLGTSASA) are Extracellular-facing. Residues 281-301 (LGTMGIGILNVIMCITAMILI) form a helical membrane-spanning segment. Topologically, residues 302 to 308 (DRVGRKK) are cytoplasmic. A helical transmembrane segment spans residues 309 to 329 (LLIWGSVGITLSLAALSGVLL). The Extracellular segment spans residues 330-341 (TLGLSASTAWMT). The chain crosses the membrane as a helical span at residues 342–362 (VVFLGVYIVFYQATWGPVVWV). Over 363 to 378 (LMPELFPSKARGAATG) the chain is Cytoplasmic. Residues 379-399 (FTTLVLSAANLIVSLVFPLML) traverse the membrane as a helical segment. The Extracellular segment spans residues 400 to 402 (SAM). The chain crosses the membrane as a helical span at residues 403–423 (GIAWVFMVFSVICLLSFFFAF). Residues 424-461 (YMVPETKGKSLEEIEASLKKRFKKKKSTQNQVLNERTL) lie on the Cytoplasmic side of the membrane.

It belongs to the major facilitator superfamily. Sugar transporter (TC 2.A.1.1) family.

It is found in the cell membrane. In terms of biological role, could serve either a nutritional or an osmotic protection function. The chain is Probable metabolite transport protein CsbC (csbC) from Bacillus subtilis (strain 168).